Consider the following 307-residue polypeptide: Acetaldehyde dehydrogenase (307 aa).

An NAD(+)-binding site is contributed by S12–I15. C127 acts as the Acyl-thioester intermediate in catalysis. NAD(+) contacts are provided by residues S158 to N166 and N278.

This sequence belongs to the acetaldehyde dehydrogenase family. In terms of assembly, monomer. Can also form a heterotetramer composed of two aldolase (TTHB246) and two dehydrogenase (TTHB247) subunits. Upon complex formation, the aldolase shows a 5-fold increase in substrate affinity, while the dehydrogenase shows a 3-fold decrease; the kcat values of each enzyme are reduced by 2-fold when they are in a complex.

The enzyme catalyses acetaldehyde + NAD(+) + CoA = acetyl-CoA + NADH + H(+). The catalysed reaction is propanal + NAD(+) + CoA = propanoyl-CoA + NADH + H(+). In terms of biological role, catalyzes the conversion of acetaldehyde or propanal to acetyl-CoA or propanoyl-CoA, respectively, using NAD(+) and coenzyme A. The aldehyde substrates can be directly channeled from the aldolase TTHB246 to the dehydrogenase TTHB247. Is the final enzyme in the meta-cleavage pathway for the degradation of aromatic compounds. This chain is Acetaldehyde dehydrogenase, found in Thermus thermophilus (strain ATCC 27634 / DSM 579 / HB8).